The sequence spans 149 residues: Transcriptional regulator MraZ (149 aa).

SpoVT-AbrB domains lie at 7 to 54 (KYVN…GISH) and 83 to 126 (AVQL…QPQN).

The protein belongs to the MraZ family. As to quaternary structure, forms oligomers.

The protein localises to the cytoplasm. The protein resides in the nucleoid. The polypeptide is Transcriptional regulator MraZ (Rickettsia conorii (strain ATCC VR-613 / Malish 7)).